The following is a 384-amino-acid chain: Mannitol-1-phosphate 5-dehydrogenase (384 aa).

3–14 (AVHFGAGNIGRG) lines the NAD(+) pocket.

It belongs to the mannitol dehydrogenase family. As to quaternary structure, monomer.

It carries out the reaction D-mannitol 1-phosphate + NAD(+) = beta-D-fructose 6-phosphate + NADH + H(+). The sequence is that of Mannitol-1-phosphate 5-dehydrogenase (mtlD) from Enterococcus faecalis (strain ATCC 700802 / V583).